The primary structure comprises 215 residues: NADH-quinone oxidoreductase subunit C (215 aa).

This sequence belongs to the complex I 30 kDa subunit family. NDH-1 is composed of 14 different subunits. Subunits NuoB, C, D, E, F, and G constitute the peripheral sector of the complex.

Its subcellular location is the cell inner membrane. The catalysed reaction is a quinone + NADH + 5 H(+)(in) = a quinol + NAD(+) + 4 H(+)(out). Functionally, NDH-1 shuttles electrons from NADH, via FMN and iron-sulfur (Fe-S) centers, to quinones in the respiratory chain. The immediate electron acceptor for the enzyme in this species is believed to be ubiquinone. Couples the redox reaction to proton translocation (for every two electrons transferred, four hydrogen ions are translocated across the cytoplasmic membrane), and thus conserves the redox energy in a proton gradient. This Methylobacterium radiotolerans (strain ATCC 27329 / DSM 1819 / JCM 2831 / NBRC 15690 / NCIMB 10815 / 0-1) protein is NADH-quinone oxidoreductase subunit C.